The primary structure comprises 451 residues: Tubulin alpha-1B chain (451 aa).

The short motif at 1 to 4 (MREC) is the MREC motif element. GTP contacts are provided by glycine 10, glutamine 11, alanine 12, and glutamine 15. An N6,N6,N6-trimethyllysine; alternate modification is found at lysine 40. N6-acetyllysine; alternate is present on lysine 40. Serine 48 bears the Phosphoserine mark. Residues glutamate 71, alanine 99, serine 140, glycine 143, glycine 144, threonine 145, glycine 146, threonine 179, glutamate 183, asparagine 206, tyrosine 224, and asparagine 228 each contribute to the GTP site. Glutamate 71 contributes to the Mg(2+) binding site. Phosphoserine is present on serine 232. Leucine 252 is a binding site for GTP. Residue glutamate 254 is part of the active site. Tyrosine 282 bears the 3'-nitrotyrosine mark. Lysine 326 is covalently cross-linked (Glycyl lysine isopeptide (Lys-Gly) (interchain with G-Cter in ubiquitin)). Arginine 339 carries the post-translational modification Omega-N-methylarginine. Lysine 370 participates in a covalent cross-link: Glycyl lysine isopeptide (Lys-Gly) (interchain with G-Cter in ubiquitin). Residue serine 439 is modified to Phosphoserine. Residues glutamate 443 and glutamate 445 each carry the 5-glutamyl polyglutamate modification. The residue at position 451 (tyrosine 451) is a 3'-nitrotyrosine.

The protein belongs to the tubulin family. In terms of assembly, heterodimer of alpha- and beta-tubulin. A typical microtubule is a hollow water-filled tube with an outer diameter of 25 nm and an inner diameter of 15 nM. Alpha-beta heterodimers associate head-to-tail to form protofilaments running lengthwise along the microtubule wall with the beta-tubulin subunit facing the microtubule plus end conferring a structural polarity. Microtubules usually have 13 protofilaments but different protofilament numbers can be found in some organisms and specialized cells. Interacts with gamma-tubulin; the interaction allows microtubules to nucleate from the gamma-tubulin ring complex (gTuRC). Nascent microtubule interacts (via alpha-tubulin MREC motif) with TTC5/STRAP; this interaction may result in tubulin mRNA-targeted degradation. Component of sperm flagellar doublet microtubules. It depends on Mg(2+) as a cofactor. In terms of processing, some glutamate residues at the C-terminus are polyglycylated, resulting in polyglycine chains on the gamma-carboxyl group. Glycylation is mainly limited to tubulin incorporated into axonemes (cilia and flagella) whereas glutamylation is prevalent in neuronal cells, centrioles, axonemes, and the mitotic spindle. Both modifications can coexist on the same protein on adjacent residues, and lowering polyglycylation levels increases polyglutamylation, and reciprocally. Cilia and flagella glycylation is required for their stability and maintenance. Flagella glycylation controls sperm motility. Some glutamate residues at the C-terminus are polyglutamylated, resulting in polyglutamate chains on the gamma-carboxyl group. Polyglutamylation plays a key role in microtubule severing by spastin (SPAST). SPAST preferentially recognizes and acts on microtubules decorated with short polyglutamate tails: severing activity by SPAST increases as the number of glutamates per tubulin rises from one to eight, but decreases beyond this glutamylation threshold. Glutamylation is also involved in cilia motility. Post-translationally, acetylation of alpha chains at Lys-40 is located inside the microtubule lumen. This modification has been correlated with increased microtubule stability, intracellular transport and ciliary assembly. In terms of processing, methylation of alpha chains at Lys-40 is found in mitotic microtubules and is required for normal mitosis and cytokinesis contributing to genomic stability. Nitration of Tyr-451 is irreversible and interferes with normal dynein intracellular distribution. Post-translationally, undergoes a tyrosination/detyrosination cycle, the cyclic removal and re-addition of a C-terminal tyrosine residue by the enzymes tubulin tyrosine carboxypeptidase (MATCAP1, VASH1 or VASH2) and tubulin tyrosine ligase (TTL), respectively. In terms of processing, tyrosination promotes microtubule interaction with CAP-Gly domain-containing proteins such as CLIP1, CLIP2 and DCTN1. Tyrosination regulates the initiation of dynein-dynactin motility via interaction with DCTN1, which brings the dynein-dynactin complex into contact with microtubules. In neurons, tyrosinated tubulins mediate the initiation of retrograde vesicle transport. Detyrosination is involved in metaphase plate congression by guiding chromosomes during mitosis: detyrosination promotes interaction with CENPE, promoting pole-proximal transport of chromosomes toward the equator. Detyrosination increases microtubules-dependent mechanotransduction in dystrophic cardiac and skeletal muscle. In cardiomyocytes, detyrosinated microtubules are required to resist to contractile compression during contraction: detyrosination promotes association with desmin (DES) at force-generating sarcomeres, leading to buckled microtubules and mechanical resistance to contraction.

It localises to the cytoplasm. It is found in the cytoskeleton. It catalyses the reaction GTP + H2O = GDP + phosphate + H(+). Tubulin is the major constituent of microtubules, protein filaments consisting of alpha- and beta-tubulin heterodimers. Microtubules grow by the addition of GTP-tubulin dimers to the microtubule end, where a stabilizing cap forms. Below the cap, tubulin dimers are in GDP-bound state, owing to GTPase activity of alpha-tubulin. This is Tubulin alpha-1B chain (TUBA1B) from Pan troglodytes (Chimpanzee).